Reading from the N-terminus, the 791-residue chain is Metabotropic glutamate receptor-like protein D (791 aa).

Positions 1 to 22 are cleaved as a signal peptide; that stretch reads MKINSFLIILILLFISIKNSNG. Over 23-390 the chain is Extracellular; that stretch reads EPEKKFKLIT…TEVYQSRPIQ (368 aa). Residues Asn72, Asn168, Asn279, Asn290, Asn306, and Asn349 are each glycosylated (N-linked (GlcNAc...) asparagine). The helical transmembrane segment at 391–411 threads the bilayer; it reads IAISSISSFFIVTVLVMMGLV. The Cytoplasmic portion of the chain corresponds to 412 to 424; that stretch reads VRFRKNPSIRSAS. Residues 425-445 form a helical membrane-spanning segment; it reads PIFLNFILFGALIIYVGIIIW. Topologically, residues 446–453 are extracellular; sequence SSSINSAS. A helical membrane pass occupies residues 454–474; sequence CNAQFWLVTLGFTTLIGSLVV. Topologically, residues 475-495 are cytoplasmic; that stretch reads KNVRIWLIFDNPELKLVKITN. The chain crosses the membrane as a helical span at residues 496–516; it reads LQLVPWVGVCLVINIILMSIL. Residues 517-550 lie on the Extracellular side of the membrane; it reads TSVGDLREVNAQGIDSLGKYEFMRICKMNSSGAS. An N-linked (GlcNAc...) asparagine glycan is attached at Asn545. A helical membrane pass occupies residues 551 to 571; that stretch reads TLYTILAYFAALLLIGVFVSW. Residues 572–585 are Cytoplasmic-facing; it reads KIRIVDILEFNESK. A helical membrane pass occupies residues 586-606; that stretch reads AIANTLYAISFCLFVIVPLMI. The Extracellular segment spans residues 607–615; that stretch reads SPQDKQSEK. Residues 616-636 form a helical membrane-spanning segment; sequence IILCIAGLFIVTAAVLIIFVP. At 637 to 791 the chain is on the cytoplasmic side; the sequence is KFYRVYIFGS…KNEENNDGDN (155 aa). Disordered stretches follow at residues 664-715 and 746-791; these read TARA…SEPN and IITE…DGDN. A compositionally biased stretch (gly residues) spans 674–689; it reads SSGGGAGSGGATGGSG. Over residues 749–760 the composition is skewed to low complexity; the sequence is ENGQDSNNNNNN. A coiled-coil region spans residues 752–781; that stretch reads QDSNNNNNNEENKDNNIENNKISEEIKENL. The segment covering 761–785 has biased composition (basic and acidic residues); that stretch reads EENKDNNIENNKISEEIKENLKNEE.

It in the N-terminal section; belongs to the BMP lipoprotein family. In the C-terminal section; belongs to the G-protein coupled receptor 3 family. GABA-B receptor subfamily.

It is found in the membrane. This chain is Metabotropic glutamate receptor-like protein D (grlD), found in Dictyostelium discoideum (Social amoeba).